The following is a 70-amino-acid chain: Exodeoxyribonuclease 7 small subunit (70 aa).

Belongs to the XseB family. Heterooligomer composed of large and small subunits.

It is found in the cytoplasm. The catalysed reaction is Exonucleolytic cleavage in either 5'- to 3'- or 3'- to 5'-direction to yield nucleoside 5'-phosphates.. Functionally, bidirectionally degrades single-stranded DNA into large acid-insoluble oligonucleotides, which are then degraded further into small acid-soluble oligonucleotides. The chain is Exodeoxyribonuclease 7 small subunit from Streptococcus gordonii (strain Challis / ATCC 35105 / BCRC 15272 / CH1 / DL1 / V288).